The chain runs to 528 residues: Benzoylformate decarboxylase (528 aa).

Residues Asn-117, Leu-118, and Arg-120 each contribute to the Mg(2+) site. The segment at 377–460 (TSTTAQMWQR…VIMNNGTYGA (84 aa)) is thiamine pyrophosphate binding. The Ca(2+) site is built by Asp-428, Asn-455, and Thr-457.

It belongs to the TPP enzyme family. In terms of assembly, homotetramer. It depends on Ca(2+) as a cofactor. Thiamine diphosphate serves as cofactor. Requires Mg(2+) as cofactor.

The catalysed reaction is phenylglyoxylate + H(+) = benzaldehyde + CO2. Its pathway is aromatic compound metabolism; (R)-mandelate degradation; benzoate from (R)-mandelate: step 3/4. The protein is Benzoylformate decarboxylase (mdlC) of Pseudomonas putida (Arthrobacter siderocapsulatus).